The primary structure comprises 146 residues: Snaclec agkisacutacin subunit B (146 aa).

The signal sequence occupies residues 1 to 23 (MGRFIFVSFGLLVVFLSLSGTAA). Positions 24-146 (DCPSDWSSYE…TCSFVCKFQA (123 aa)) constitute a C-type lectin domain. 3 cysteine pairs are disulfide-bonded: C25/C36, C53/C142, and C119/C134. Positions 64 and 70 each coordinate Ca(2+).

The protein belongs to the snaclec family. In terms of assembly, heterodimer of subunits A and B; disulfide-linked. Expressed by the venom gland.

It localises to the secreted. Functionally, anticoagulant protein which binds to the gamma-carboxyglutamic acid-domain regions of factor IX (F9) and factor X (F10) in the presence of calcium with a 1 to 1 stoichiometry. Also inhibits platelet aggregation by binding to platelet glycoprotein Ibalpha (GP1BA) and functioning as a blocker of von Willebrand factor (VWF). Is devoid of hemorrhagic and lethal activities. Possesses antithrombotic and thrombolytic activities. Also hydrolyzes the Aalpha-chain of fibrinogen (FGA). Does not affect the Bbeta-chain (FGB) and the gamma chain (FGG). In Deinagkistrodon acutus (Hundred-pace snake), this protein is Snaclec agkisacutacin subunit B.